Here is a 244-residue protein sequence, read N- to C-terminus: tRNA (guanine-N(7)-)-methyltransferase (244 aa).

The span at 1 to 10 (MSDTPQSPAQ) shows a compositional bias: polar residues. The interval 1–20 (MSDTPQSPAQDSLAEHDEAR) is disordered. S-adenosyl-L-methionine is bound by residues E74, E99, D126, and D149. D149 is a catalytic residue. Substrate-binding positions include K153, D185, and 222–225 (TKFE).

This sequence belongs to the class I-like SAM-binding methyltransferase superfamily. TrmB family.

The catalysed reaction is guanosine(46) in tRNA + S-adenosyl-L-methionine = N(7)-methylguanosine(46) in tRNA + S-adenosyl-L-homocysteine. Its pathway is tRNA modification; N(7)-methylguanine-tRNA biosynthesis. Its function is as follows. Catalyzes the formation of N(7)-methylguanine at position 46 (m7G46) in tRNA. This chain is tRNA (guanine-N(7)-)-methyltransferase, found in Pseudomonas paraeruginosa (strain DSM 24068 / PA7) (Pseudomonas aeruginosa (strain PA7)).